Reading from the N-terminus, the 1085-residue chain is Activating transcription factor 7-interacting protein 1 (1085 aa).

9 disordered regions span residues 1 to 22 (MDNT…RASD), 47 to 109 (GKHE…VNVT), 127 to 245 (LGSN…NTDS), 329 to 381 (PNKS…VHSK), 469 to 499 (AAKE…ANAN), 517 to 560 (RNVG…TSSP), 650 to 843 (ASTN…TTIH), 889 to 910 (NSVR…QTGS), and 932 to 975 (GAPQ…ANTS). Over residues 54 to 64 (SDLNSPLSNTD) the composition is skewed to polar residues. Basic and acidic residues-rich tracts occupy residues 82 to 91 (SEIKRPESRA) and 133 to 150 (NFHE…RESD). 2 stretches are compositionally biased toward polar residues: residues 151 to 165 (TPSG…NSFS) and 173 to 182 (NDITIISNSP). Composition is skewed to basic and acidic residues over residues 347–379 (EREV…DSVH) and 469–479 (AAKEDMKKKQE). Residues 446–480 (NKRHKTVLTELQAKITRLTKRFGAAKEDMKKKQEN) adopt a coiled-coil conformation. 3 stretches are compositionally biased toward low complexity: residues 487–499 (SSGK…ANAN), 529–547 (APVS…TPAS), and 651–666 (STNT…VSSP). A compositionally biased stretch (polar residues) spans 667–717 (GVQRNSPASAGSVRTTLAVQAVSTTHPVAQTTRTSLPTVGTSGLHNSTSSR). A compositionally biased stretch (low complexity) spans 732–743 (TAPTEPPTITAP). 3 stretches are compositionally biased toward polar residues: residues 746–775 (ENQT…VTGS), 792–810 (SSQA…AQSI), and 830–843 (TGVP…TTIH). Over residues 950–968 (PRPVHPAPLPEAPQPPRLP) the composition is skewed to pro residues. The Fibronectin type-III domain occupies 976 to 1082 (LPQKPQLKLA…DPQSTDVISS (107 aa)).

It belongs to the MCAF family.

The protein localises to the nucleus. Recruiter that couples transcriptional factors to general transcription apparatus and thereby modulates transcription regulation and chromatin formation. Can both act as an activator or a repressor depending on the context. Mediates MBD1-dependent transcriptional repression, probably by recruiting complexes containing histone methyltransferase activity. May belong to a complex that represses transcription and couples DNA methylation and histone H3 'Lys-9' trimethylation (H3K9me3). This chain is Activating transcription factor 7-interacting protein 1 (ATF7IP), found in Gallus gallus (Chicken).